We begin with the raw amino-acid sequence, 166 residues long: CDP-archaeol synthase (166 aa).

5 helical membrane-spanning segments follow: residues 7–27, 55–75, 78–98, 116–136, and 138–158; these read LLLS…GPFI, LIVA…FFTA, TLIS…GAFI, LDFV…ITWY, and FLFI…VAYL.

This sequence belongs to the CDP-archaeol synthase family. It depends on Mg(2+) as a cofactor.

Its subcellular location is the cell membrane. It catalyses the reaction 2,3-bis-O-(geranylgeranyl)-sn-glycerol 1-phosphate + CTP + H(+) = CDP-2,3-bis-O-(geranylgeranyl)-sn-glycerol + diphosphate. It functions in the pathway membrane lipid metabolism; glycerophospholipid metabolism. Its function is as follows. Catalyzes the formation of CDP-2,3-bis-(O-geranylgeranyl)-sn-glycerol (CDP-archaeol) from 2,3-bis-(O-geranylgeranyl)-sn-glycerol 1-phosphate (DGGGP) and CTP. This reaction is the third ether-bond-formation step in the biosynthesis of archaeal membrane lipids. The polypeptide is CDP-archaeol synthase (Saccharolobus islandicus (strain Y.N.15.51 / Yellowstone #2) (Sulfolobus islandicus)).